The sequence spans 312 residues: Homoserine O-succinyltransferase (312 aa).

Cys142 serves as the catalytic Acyl-thioester intermediate. Residues Lys163 and Ser192 each coordinate substrate. His235 serves as the catalytic Proton acceptor. The active site involves Glu237. Arg249 is a binding site for substrate.

Belongs to the MetA family.

It is found in the cytoplasm. It catalyses the reaction L-homoserine + succinyl-CoA = O-succinyl-L-homoserine + CoA. It functions in the pathway amino-acid biosynthesis; L-methionine biosynthesis via de novo pathway; O-succinyl-L-homoserine from L-homoserine: step 1/1. In terms of biological role, transfers a succinyl group from succinyl-CoA to L-homoserine, forming succinyl-L-homoserine. The sequence is that of Homoserine O-succinyltransferase from Shewanella halifaxensis (strain HAW-EB4).